We begin with the raw amino-acid sequence, 101 residues long: Small ribosomal subunit protein uS14 (101 aa).

Belongs to the universal ribosomal protein uS14 family. As to quaternary structure, part of the 30S ribosomal subunit. Contacts proteins S3 and S10.

Binds 16S rRNA, required for the assembly of 30S particles and may also be responsible for determining the conformation of the 16S rRNA at the A site. This Ehrlichia chaffeensis (strain ATCC CRL-10679 / Arkansas) protein is Small ribosomal subunit protein uS14.